Here is a 293-residue protein sequence, read N- to C-terminus: 4-hydroxy-tetrahydrodipicolinate synthase (293 aa).

Residue T45 coordinates pyruvate. Residue Y133 is the Proton donor/acceptor of the active site. The Schiff-base intermediate with substrate role is filled by K161. Residue I204 coordinates pyruvate.

Belongs to the DapA family. Homotetramer; dimer of dimers.

It localises to the cytoplasm. It carries out the reaction L-aspartate 4-semialdehyde + pyruvate = (2S,4S)-4-hydroxy-2,3,4,5-tetrahydrodipicolinate + H2O + H(+). It participates in amino-acid biosynthesis; L-lysine biosynthesis via DAP pathway; (S)-tetrahydrodipicolinate from L-aspartate: step 3/4. Catalyzes the condensation of (S)-aspartate-beta-semialdehyde [(S)-ASA] and pyruvate to 4-hydroxy-tetrahydrodipicolinate (HTPA). This is 4-hydroxy-tetrahydrodipicolinate synthase from Yersinia pseudotuberculosis serotype I (strain IP32953).